A 397-amino-acid chain; its full sequence is tRNA-specific 2-thiouridylase MnmA (397 aa).

ATP-binding positions include 6–13 (AMSGGVDS) and Leu32. The active-site Nucleophile is Cys101. An intrachain disulfide couples Cys101 to Cys199. Gly125 contributes to the ATP binding site. The interaction with tRNA stretch occupies residues 148-150 (KDQ). Cys199 functions as the Cysteine persulfide intermediate in the catalytic mechanism.

It belongs to the MnmA/TRMU family.

It is found in the cytoplasm. It catalyses the reaction S-sulfanyl-L-cysteinyl-[protein] + uridine(34) in tRNA + AH2 + ATP = 2-thiouridine(34) in tRNA + L-cysteinyl-[protein] + A + AMP + diphosphate + H(+). Catalyzes the 2-thiolation of uridine at the wobble position (U34) of tRNA, leading to the formation of s(2)U34. The polypeptide is tRNA-specific 2-thiouridylase MnmA (Clavibacter sepedonicus (Clavibacter michiganensis subsp. sepedonicus)).